The primary structure comprises 148 residues: Arginine repressor (148 aa).

This sequence belongs to the ArgR family.

It is found in the cytoplasm. The protein operates within amino-acid biosynthesis; L-arginine biosynthesis [regulation]. Regulates arginine biosynthesis genes. The chain is Arginine repressor from Pelodictyon phaeoclathratiforme (strain DSM 5477 / BU-1).